An 803-amino-acid polypeptide reads, in one-letter code: Early 94 kDa protein (803 aa).

The polypeptide is Early 94 kDa protein (Lepidoptera (butterflies and moths)).